The sequence spans 307 residues: uncharacterized protein (307 aa).

A helical membrane pass occupies residues 12–34 (LLAFLLALIMIGSVFAYMLSGGS).

The protein resides in the membrane. This is an uncharacterized protein from Archaeoglobus fulgidus (strain ATCC 49558 / DSM 4304 / JCM 9628 / NBRC 100126 / VC-16).